The primary structure comprises 567 residues: Hexose transporter HXT16 (567 aa).

Positions 1–19 (MASEQSSPEINADNLNSSA) are enriched in polar residues. Positions 1 to 32 (MASEQSSPEINADNLNSSAADVHVQPPGEKEW) are disordered. Topologically, residues 1–55 (MASEQSSPEINADNLNSSAADVHVQPPGEKEWSDGFYDKEVINGNTPDAPKRGFL) are cytoplasmic. The chain crosses the membrane as a helical span at residues 56 to 76 (GYLIIYLLCYPVSFGGFLPGW). At 77–112 (DSGITAGFINMDNFKMNFGSYKHSTGEYYLSNVRMG) the chain is on the extracellular side. The chain crosses the membrane as a helical span at residues 113–133 (LLVAMFSVGCSIGGVAFARLA). Topologically, residues 134–139 (DTLGRR) are cytoplasmic. The chain crosses the membrane as a helical span at residues 140–160 (LAIVIVVLVYMVGAIIQISSN). Residues 161–170 (HKWYQYFVGK) are Extracellular-facing. A helical membrane pass occupies residues 171–191 (IIYGLGAGGCSVLCPMLLSEI). Residues 192-197 (APTDLR) lie on the Cytoplasmic side of the membrane. A helical transmembrane segment spans residues 198–218 (GGLVSLYQLNMTFGIFLGYCS). Topologically, residues 219-232 (VYGTRKYSNTAQWR) are extracellular. A helical transmembrane segment spans residues 233–253 (IPVGLCFLWALIIIVGMLLVP). The Cytoplasmic segment spans residues 254-336 (ESPRYLIECE…VQTFLQLTGE (83 aa)). Residues 337 to 353 (NYFFFYGTTIFKSVGLT) traverse the membrane as a helical segment. Topologically, residues 354–359 (DGFETS) are extracellular. A helical membrane pass occupies residues 360–377 (IVLGTVNFFSTIIAVMVV). The Cytoplasmic segment spans residues 378 to 384 (DKIGRRK). A helical membrane pass occupies residues 385 to 405 (CLLFGAASMMACMVIFASIGV). Topologically, residues 406–427 (KCLYPHGQDGPSSKGAGNAMIV) are extracellular. The chain crosses the membrane as a helical span at residues 428 to 448 (FTCFYIFCFATTWAPVAYIVV). At 449–465 (AESFPSKVKSKAMSIST) the chain is on the cytoplasmic side. A helical transmembrane segment spans residues 466–486 (AFNWLWQFLIGFFTPFITGSI). A topological domain (extracellular) is located at residue His-487. The helical transmembrane segment at 488–508 (FYYGYVFVGCLVAMFLYVFFF) threads the bilayer. Topologically, residues 509 to 567 (LPETIGLSLEETQLLYEEGIKPWKSASWVPPSRRGASSRETEAKKKSWKEVLKFPKSFN) are cytoplasmic. The segment at 533–555 (SASWVPPSRRGASSRETEAKKKS) is disordered. The segment covering 545 to 555 (SSRETEAKKKS) has biased composition (basic and acidic residues).

It belongs to the major facilitator superfamily. Sugar transporter (TC 2.A.1.1) family.

It localises to the membrane. Probable glucose transporter. The sequence is that of Hexose transporter HXT16 (HXT16) from Saccharomyces cerevisiae (strain ATCC 204508 / S288c) (Baker's yeast).